Here is a 290-residue protein sequence, read N- to C-terminus: MDKLIKSIAKSGSFRAYVLDSTETVRTAQEEHQSLSSSTVALGRTLIANQILAANQKGDSKVTVKVIGDSSFGHIISVADTKGNVKGYIQNAGVDVKKTASGEVIVGPFMGNGQFVVITDYGTGNPYTSSTPLVSGEIGEDLAYYLTESEQTPSAVGLNVLLDEKDKVKVAGGFMLQVLPEASEEEITRYEKRIQEMPAISTLLESEDHIEALLKAIYGEEDYKVLVEEDLQFTCDCSRQRFEAALMTLSKSDLKEMKEEDHGAEIVCQFCGKKYQFKESDLEEMINDKA.

Intrachain disulfides connect Cys235/Cys237 and Cys268/Cys271.

Belongs to the HSP33 family. In terms of processing, under oxidizing conditions two disulfide bonds are formed involving the reactive cysteines. Under reducing conditions zinc is bound to the reactive cysteines and the protein is inactive.

The protein resides in the cytoplasm. Its function is as follows. Redox regulated molecular chaperone. Protects both thermally unfolding and oxidatively damaged proteins from irreversible aggregation. Plays an important role in the bacterial defense system toward oxidative stress. In Streptococcus mutans serotype c (strain ATCC 700610 / UA159), this protein is 33 kDa chaperonin.